Reading from the N-terminus, the 230-residue chain is Porin OmpL (230 aa).

The N-terminal stretch at 1–20 (MKSLNTLVILTSVISTSVFA) is a signal peptide.

The protein belongs to the oligogalacturonate-specific porin KdgM (TC 1.B.35) family. OmpL subfamily.

The protein localises to the cell outer membrane. Functionally, outer membrane channel protein that allows an efficient diffusion of low-molecular-weight solutes such as small sugars and tetraglycine. However, the specific substrate recognized by the OmpL channel is unknown. This is Porin OmpL (ompL) from Salmonella paratyphi A (strain ATCC 9150 / SARB42).